The chain runs to 60 residues: Large ribosomal subunit protein uL30 (60 aa).

It belongs to the universal ribosomal protein uL30 family. Part of the 50S ribosomal subunit.

The polypeptide is Large ribosomal subunit protein uL30 (Cutibacterium acnes (strain DSM 16379 / KPA171202) (Propionibacterium acnes)).